Here is a 240-residue protein sequence, read N- to C-terminus: UDP-2,3-diacylglucosamine hydrolase (240 aa).

5 residues coordinate Mn(2+): aspartate 9, histidine 11, aspartate 43, asparagine 81, and histidine 116. 81 to 82 provides a ligand contact to substrate; the sequence is NR. Residues aspartate 124, serine 162, lysine 166, lysine 169, and histidine 197 each coordinate substrate. Residues histidine 197 and histidine 199 each coordinate Mn(2+).

It belongs to the LpxH family. It depends on Mn(2+) as a cofactor.

The protein localises to the cell inner membrane. The enzyme catalyses UDP-2-N,3-O-bis[(3R)-3-hydroxytetradecanoyl]-alpha-D-glucosamine + H2O = 2-N,3-O-bis[(3R)-3-hydroxytetradecanoyl]-alpha-D-glucosaminyl 1-phosphate + UMP + 2 H(+). It participates in glycolipid biosynthesis; lipid IV(A) biosynthesis; lipid IV(A) from (3R)-3-hydroxytetradecanoyl-[acyl-carrier-protein] and UDP-N-acetyl-alpha-D-glucosamine: step 4/6. Hydrolyzes the pyrophosphate bond of UDP-2,3-diacylglucosamine to yield 2,3-diacylglucosamine 1-phosphate (lipid X) and UMP by catalyzing the attack of water at the alpha-P atom. Involved in the biosynthesis of lipid A, a phosphorylated glycolipid that anchors the lipopolysaccharide to the outer membrane of the cell. The chain is UDP-2,3-diacylglucosamine hydrolase from Neisseria meningitidis serogroup C / serotype 2a (strain ATCC 700532 / DSM 15464 / FAM18).